Consider the following 520-residue polypeptide: ADP,ATP carrier protein 4 (520 aa).

12 helical membrane-spanning segments follow: residues 43–63 (LSKFLFITLLMFCILFIQNLI), 80–100 (ISFLKFWGVMPCAFLMTAIYV), 111–131 (IFYLIISIFLAFFALFAYVIF), 166–186 (FSLFYIIAELWPNVAFALLFW), 201–221 (FYPLFGLLSQTGIYLAGQFLE), 240–260 (FHTLSVQIILTIVLILGIVGI), 305–325 (LIATLLICYGIAINLVEGPWK), 339–359 (AAFIGNYLSYTGAFTILFVVL), 370–390 (FTAAIITPIIVFTTGILFFAV), 399–419 (LIVASFILTDPALIAITIGAI), 462–482 (LGKSGSAFLQSLVFIILPSAS), and 485–505 (SISVCLMFIFIITCLIWFWAV).

Belongs to the ADP/ATP translocase tlc family.

Its subcellular location is the cell membrane. In terms of biological role, provides the rickettsial cell with host ATP in exchange for rickettsial ADP. This is an obligate exchange system. This energy acquiring activity is an important component of rickettsial parasitism. This is ADP,ATP carrier protein 4 (tlcD) from Rickettsia bellii (strain RML369-C).